The primary structure comprises 872 residues: F-box protein pof6 (872 aa).

An F-box domain is found at 30–75 (FGCLTINIYLKIFTLISTPDLCNCRLVCRKFQQLCDYNSIYVKKLL). A disordered region spans residues 101–122 (MSSNTSKGFHLQSSDKKYADSD). Basic and acidic residues predominate over residues 113–122 (SSDKKYADSD).

In terms of assembly, interacts with skp1. Forms a complex with pof6 and skp1.

The protein localises to the cytoplasm. Its subcellular location is the nucleus. Functionally, together with skp1, essential for septum processing and cell separation. The sequence is that of F-box protein pof6 (pof6) from Schizosaccharomyces pombe (strain 972 / ATCC 24843) (Fission yeast).